We begin with the raw amino-acid sequence, 346 residues long: Phosphoribosylformylglycinamidine cyclo-ligase (346 aa).

It belongs to the AIR synthase family.

It is found in the cytoplasm. It carries out the reaction 2-formamido-N(1)-(5-O-phospho-beta-D-ribosyl)acetamidine + ATP = 5-amino-1-(5-phospho-beta-D-ribosyl)imidazole + ADP + phosphate + H(+). It participates in purine metabolism; IMP biosynthesis via de novo pathway; 5-amino-1-(5-phospho-D-ribosyl)imidazole from N(2)-formyl-N(1)-(5-phospho-D-ribosyl)glycinamide: step 2/2. This is Phosphoribosylformylglycinamidine cyclo-ligase from Synechococcus sp. (strain CC9311).